We begin with the raw amino-acid sequence, 209 residues long: Orotate phosphoribosyltransferase (209 aa).

Residues arginine 98, lysine 102, histidine 104, and 124–132 (EDLISTGKS) contribute to the 5-phospho-alpha-D-ribose 1-diphosphate site. Orotate is bound at residue serine 128.

This sequence belongs to the purine/pyrimidine phosphoribosyltransferase family. PyrE subfamily. In terms of assembly, homodimer. The cofactor is Mg(2+).

The catalysed reaction is orotidine 5'-phosphate + diphosphate = orotate + 5-phospho-alpha-D-ribose 1-diphosphate. Its pathway is pyrimidine metabolism; UMP biosynthesis via de novo pathway; UMP from orotate: step 1/2. Its function is as follows. Catalyzes the transfer of a ribosyl phosphate group from 5-phosphoribose 1-diphosphate to orotate, leading to the formation of orotidine monophosphate (OMP). The protein is Orotate phosphoribosyltransferase of Malacoplasma penetrans (strain HF-2) (Mycoplasma penetrans).